Consider the following 498-residue polypeptide: ATP synthase subunit beta, chloroplastic (498 aa).

Gly172–Thr179 lines the ATP pocket.

This sequence belongs to the ATPase alpha/beta chains family. In terms of assembly, F-type ATPases have 2 components, CF(1) - the catalytic core - and CF(0) - the membrane proton channel. CF(1) has five subunits: alpha(3), beta(3), gamma(1), delta(1), epsilon(1). CF(0) has four main subunits: a(1), b(1), b'(1) and c(9-12).

The protein localises to the plastid. It localises to the chloroplast thylakoid membrane. It catalyses the reaction ATP + H2O + 4 H(+)(in) = ADP + phosphate + 5 H(+)(out). Produces ATP from ADP in the presence of a proton gradient across the membrane. The catalytic sites are hosted primarily by the beta subunits. The sequence is that of ATP synthase subunit beta, chloroplastic from Nandina domestica (Heavenly bamboo).